Reading from the N-terminus, the 781-residue chain is Lon protease (781 aa).

Positions 16–214 constitute a Lon N-terminal domain; sequence ANVLVTRGIV…KILSFTIDER (199 aa). Position 365–372 (365–372) interacts with ATP; it reads GPPGVGKT. One can recognise a Lon proteolytic domain in the interval 601-781; sequence EYMPGVVNGM…YDDVYNRLFK (181 aa). Residues Ser688 and Lys731 contribute to the active site.

Belongs to the peptidase S16 family. As to quaternary structure, homohexamer. Organized in a ring with a central cavity.

Its subcellular location is the cytoplasm. It catalyses the reaction Hydrolysis of proteins in presence of ATP.. Its function is as follows. ATP-dependent serine protease that mediates the selective degradation of mutant and abnormal proteins as well as certain short-lived regulatory proteins. Required for cellular homeostasis and for survival from DNA damage and developmental changes induced by stress. Degrades polypeptides processively to yield small peptide fragments that are 5 to 10 amino acids long. Binds to DNA in a double-stranded, site-specific manner. This Malacoplasma penetrans (strain HF-2) (Mycoplasma penetrans) protein is Lon protease.